A 356-amino-acid polypeptide reads, in one-letter code: DNA polymerase IV (356 aa).

The 182-residue stretch at 6-187 (IIHVDMDYFF…LDIGDFPGVG (182 aa)) folds into the UmuC domain. 2 residues coordinate Mg(2+): D10 and D105. E106 is a catalytic residue.

This sequence belongs to the DNA polymerase type-Y family. In terms of assembly, monomer. The cofactor is Mg(2+).

It is found in the cytoplasm. It catalyses the reaction DNA(n) + a 2'-deoxyribonucleoside 5'-triphosphate = DNA(n+1) + diphosphate. Its function is as follows. Poorly processive, error-prone DNA polymerase involved in untargeted mutagenesis. Copies undamaged DNA at stalled replication forks, which arise in vivo from mismatched or misaligned primer ends. These misaligned primers can be extended by PolIV. Exhibits no 3'-5' exonuclease (proofreading) activity. May be involved in translesional synthesis, in conjunction with the beta clamp from PolIII. This chain is DNA polymerase IV, found in Staphylococcus saprophyticus subsp. saprophyticus (strain ATCC 15305 / DSM 20229 / NCIMB 8711 / NCTC 7292 / S-41).